A 181-amino-acid polypeptide reads, in one-letter code: Cytidylate kinase (181 aa).

Position 12–20 (Gly-12–Thr-20) interacts with ATP.

Belongs to the cytidylate kinase family. Type 2 subfamily.

The protein resides in the cytoplasm. It carries out the reaction CMP + ATP = CDP + ADP. The catalysed reaction is dCMP + ATP = dCDP + ADP. In Pyrococcus abyssi (strain GE5 / Orsay), this protein is Cytidylate kinase (cmk).